The primary structure comprises 314 residues: Glucocorticoid receptor (314 aa).

The tract at residues 1–44 (ASAAVSAAPTEKEFPKTHSDVSSEQQNLKGQKGSNGGSMKLHTT) is disordered. The modulating stretch occupies residues 1–281 (ASAAVSAAPT…SAATGPPPKL (281 aa)). The span at 10-21 (TEKEFPKTHSDV) shows a compositional bias: basic and acidic residues. Phosphoserine is present on residues serine 65, serine 73, and serine 88. Residue lysine 120 forms a Glycyl lysine isopeptide (Lys-Gly) (interchain with G-Cter in SUMO2) linkage. The residue at position 129 (serine 129) is a Phosphoserine. Glycyl lysine isopeptide (Lys-Gly) (interchain with G-Cter in SUMO); alternate cross-links involve residues lysine 139 and lysine 155. Glycyl lysine isopeptide (Lys-Gly) (interchain with G-Cter in SUMO2); alternate cross-links involve residues lysine 139 and lysine 155. Serine 266 carries the post-translational modification Phosphoserine. A Glycyl lysine isopeptide (Lys-Gly) (interchain with G-Cter in ubiquitin) cross-link involves residue lysine 280. An NR C4-type zinc finger spans residues 282–314 (CLVCSDEASGCHYGVLTCGSCKVFFKRAVEGQH). The segment at residues 282–314 (CLVCSDEASGCHYGVLTCGSCKVFFKRAVEGQH) is a DNA-binding region (nuclear receptor).

Belongs to the nuclear hormone receptor family. NR3 subfamily. Heteromultimeric cytoplasmic complex with HSP90AA1, HSPA1A/HSPA1B, and FKBP5 or another immunophilin such as PPID, STIP1, or the immunophilin homolog PPP5C. Upon ligand binding FKBP5 dissociates from the complex and FKBP4 takes its place, thereby linking the complex to dynein and mediating transport to the nucleus, where the complex dissociates. Probably forms a complex composed of chaperones HSP90 and HSP70, co-chaperones CDC37, PPP5C, TSC1 and client protein TSC2, CDK4, AKT, RAF1 and NR3C1; this complex does not contain co-chaperones STIP1/HOP and PTGES3/p23. Directly interacts with UNC45A. Binds to DNA as a homodimer, and as heterodimer with NR3C2 or the retinoid X receptor. Binds STAT5A and STAT5B homodimers and heterodimers. Interacts with NRIP1, POU2F1, POU2F2 and TRIM28. Interacts with several coactivator complexes, including the SMARCA4 complex, CREBBP/EP300, TADA2L (Ada complex) and p160 coactivators such as NCOA2 and NCOA6. Interaction with BAG1 inhibits transactivation. Interacts with HEXIM1 and TGFB1I1. Interacts with NCOA1. Interacts with NCOA3, SMARCA4, SMARCC1, SMARCD1, and SMARCE1. Interacts with CLOCK, CRY1 and CRY2 in a ligand-dependent fashion. Interacts with CIART. Interacts with RWDD3. Interacts with UBE2I/UBC9 and this interaction is enhanced in the presence of RWDD3. Interacts with GRIP1. Interacts with NR4A3 (via nuclear receptor DNA-binding domain), represses transcription activity of NR4A3 on the POMC promoter Nur response element (NurRE). Directly interacts with PNRC2 to attract and form a complex with UPF1 and DCP1A; the interaction leads to rapid mRNA degradation. Interacts with GSK3B. Interacts with FNIP1 and FNIP2. Interacts (via C-terminus) with HNRNPU (via C-terminus). Interacts with MCM3AP. Interacts (via domain NR LBD) with HSP90AA1 and HSP90AB1. In the absence of hormonal ligand, interacts with TACC1. Interacts (via NR LBD domain) with ZNF764 (via KRAB domain); the interaction regulates transcription factor activity of NR3C1 by directing its actions toward certain biologic pathways. Acetylation by CLOCK reduces its binding to glucocorticoid response elements and its transcriptional activity. In terms of processing, increased proteasome-mediated degradation in response to glucocorticoids. Post-translationally, phosphorylated in the absence of hormone; becomes hyperphosphorylated in the presence of glucocorticoid. The Ser-65, Ser-88 and Ser-266-phosphorylated forms are mainly cytoplasmic, and the Ser-73-phosphorylated form is nuclear. Phosphorylation at Ser-73 increases transcriptional activity. Phosphorylation at Ser-65, Ser-88 and Ser-266 decreases signaling capacity. Phosphorylation at Ser-266 may protect from glucocorticoid-induced apoptosis. Phosphorylation at Ser-65 and Ser-73 is not required in regulation of chromosome segregation. May be dephosphorylated by PPP5C, attenuates NR3C1 action. Ubiquitinated by UBR5, leading to its degradation: UBR5 specifically recognizes and binds ligand-bound NR3C1 when it is not associated with coactivators (NCOAs). In presence of NCOAs, the UBR5-degron is not accessible, preventing its ubiquitination and degradation. In terms of processing, sumoylation at Lys-139 and Lys-155 negatively regulates its transcriptional activity. Heat shock increases sumoylation in a RWDD3-dependent manner.

It is found in the cytoplasm. The protein resides in the nucleus. Its subcellular location is the mitochondrion. The protein localises to the cytoskeleton. It localises to the spindle. It is found in the microtubule organizing center. The protein resides in the centrosome. Its subcellular location is the chromosome. The protein localises to the nucleoplasm. Its function is as follows. Receptor for glucocorticoids (GC). Has a dual mode of action: as a transcription factor that binds to glucocorticoid response elements (GRE), both for nuclear and mitochondrial DNA, and as a modulator of other transcription factors. Affects inflammatory responses, cellular proliferation and differentiation in target tissues. Involved in chromatin remodeling. Plays a role in rapid mRNA degradation by binding to the 5' UTR of target mRNAs and interacting with PNRC2 in a ligand-dependent manner which recruits the RNA helicase UPF1 and the mRNA-decapping enzyme DCP1A, leading to RNA decay. Could act as a coactivator for STAT5-dependent transcription upon growth hormone (GH) stimulation and could reveal an essential role of hepatic GR in the control of body growth. Mediates glucocorticoid-induced apoptosis. Promotes accurate chromosome segregation during mitosis. May act as a tumor suppressor. May play a negative role in adipogenesis through the regulation of lipolytic and antilipogenic gene expression. The polypeptide is Glucocorticoid receptor (NR3C1) (Ovis aries (Sheep)).